The primary structure comprises 347 residues: Eukaryotic translation initiation factor 3 subunit I (347 aa).

WD repeat units lie at residues 8-49, 50-89, 146-186, 198-237, 239-278, and 295-336; these read GHER…GTYE, GHNGTVWTVDVDSTSTLLVSGSADNQMRLWEVATGKCLFT, TFSG…PESG, AHTDVISDLQMSADRTYFVTSSRDKTSKLIDSKTLQVIKT, ATETPLNSASIHPTKPFVIVGGGQDAMNVTTTSARQGRFE, and GHFG…SKLY.

This sequence belongs to the eIF-3 subunit I family. Component of the eukaryotic translation initiation factor 3 (eIF-3) complex.

The protein resides in the cytoplasm. Functionally, component of the eukaryotic translation initiation factor 3 (eIF-3) complex, which is involved in protein synthesis of a specialized repertoire of mRNAs and, together with other initiation factors, stimulates binding of mRNA and methionyl-tRNAi to the 40S ribosome. The eIF-3 complex specifically targets and initiates translation of a subset of mRNAs involved in cell proliferation. The polypeptide is Eukaryotic translation initiation factor 3 subunit I (Mycosarcoma maydis (Corn smut fungus)).